The primary structure comprises 135 residues: Ribosome-binding factor A (135 aa).

The protein belongs to the RbfA family. In terms of assembly, monomer. Binds 30S ribosomal subunits, but not 50S ribosomal subunits or 70S ribosomes.

Its subcellular location is the cytoplasm. Functionally, one of several proteins that assist in the late maturation steps of the functional core of the 30S ribosomal subunit. Associates with free 30S ribosomal subunits (but not with 30S subunits that are part of 70S ribosomes or polysomes). Required for efficient processing of 16S rRNA. May interact with the 5'-terminal helix region of 16S rRNA. The chain is Ribosome-binding factor A from Aliivibrio salmonicida (strain LFI1238) (Vibrio salmonicida (strain LFI1238)).